Here is a 310-residue protein sequence, read N- to C-terminus: S-methyl-5'-thioadenosine phosphorylase (310 aa).

Phosphate is bound by residues Thr20, 62 to 63 (RH), and 95 to 96 (SA). Met197 contributes to the substrate binding site. Phosphate is bound at residue Ser198. 221 to 223 (DYD) lines the substrate pocket.

The protein belongs to the PNP/MTAP phosphorylase family. MTAP subfamily. In terms of assembly, homotrimer.

The protein resides in the cytoplasm. Its subcellular location is the nucleus. It catalyses the reaction S-methyl-5'-thioadenosine + phosphate = 5-(methylsulfanyl)-alpha-D-ribose 1-phosphate + adenine. The protein operates within amino-acid biosynthesis; L-methionine biosynthesis via salvage pathway; S-methyl-5-thio-alpha-D-ribose 1-phosphate from S-methyl-5'-thioadenosine (phosphorylase route): step 1/1. In terms of biological role, catalyzes the reversible phosphorylation of S-methyl-5'-thioadenosine (MTA) to adenine and 5-methylthioribose-1-phosphate. Involved in the breakdown of MTA, a major by-product of polyamine biosynthesis. Responsible for the first step in the methionine salvage pathway after MTA has been generated from S-adenosylmethionine. Has broad substrate specificity with 6-aminopurine nucleosides as preferred substrates. This is S-methyl-5'-thioadenosine phosphorylase from Neurospora crassa (strain ATCC 24698 / 74-OR23-1A / CBS 708.71 / DSM 1257 / FGSC 987).